The following is a 224-amino-acid chain: Urease accessory protein UreF (224 aa).

It belongs to the UreF family. In terms of assembly, ureD, UreF and UreG form a complex that acts as a GTP-hydrolysis-dependent molecular chaperone, activating the urease apoprotein by helping to assemble the nickel containing metallocenter of UreC. The UreE protein probably delivers the nickel.

Its subcellular location is the cytoplasm. In terms of biological role, required for maturation of urease via the functional incorporation of the urease nickel metallocenter. The protein is Urease accessory protein UreF of Pseudomonas putida (strain GB-1).